Consider the following 128-residue polypeptide: uncharacterized protein (128 aa).

3 consecutive transmembrane segments (helical) span residues 19-41, 54-71, and 75-97; these read MAIV…YVGS, LTFL…SIMQ, and PLIA…VDNL.

It is found in the cell membrane. This is an uncharacterized protein from Pasteurella multocida (strain Pm70).